We begin with the raw amino-acid sequence, 369 residues long: MELATAGKVNEVLFMNRGEGESSYAQNSSFTQQVASMAQPALENAVETLFSRDFHLQALNAADLGCAAGPNTFAVISTIKRMMEKKCRELNCQTLELQVYLNDLFGNDFNTLFKGLSSEVIGNKCEEVPCYVMGVPGSFHGRLFPRNSLHLVHSSYSVHWLTQAPKGLTSREGLALNKGKIYISKTSPPVVREAYLSQFHEDFTMFLNARSQEVVPNGCMVLILRGRQCSDPSDMQSCFTWELLAMAIAELVSQGLIDEDKLDTFNIPSYFASLEEVKDIVERDGSFTIDHIEGFDLDSVEMQENDKWVRGEKFTKVVRAFTEPIISNQFGPEIMDKLYDKFTHIVVSDLEAKLPKTTSIILVLSKIDG.

Y24 is a binding site for S-adenosyl-L-homocysteine. Position 31 (T31) interacts with caffeine. 6 residues coordinate S-adenosyl-L-homocysteine: C66, N71, D103, L104, S138, and F139. Caffeine-binding residues include Y156, H159, and W160. Position 177 (N177) interacts with Mg(2+). R225 contacts caffeine. Residues D263, F265, and N266 each coordinate Mg(2+). A caffeine-binding site is contributed by F321.

This sequence belongs to the methyltransferase superfamily. Type-7 methyltransferase family. It depends on Mg(2+) as a cofactor. Expressed in young leaves and flowers.

The enzyme catalyses 7-methylxanthine + S-adenosyl-L-methionine = theobromine + S-adenosyl-L-homocysteine + H(+). It catalyses the reaction theobromine + S-adenosyl-L-methionine = caffeine + S-adenosyl-L-homocysteine + H(+). The catalysed reaction is 1,7-dimethylxanthine + S-adenosyl-L-methionine = caffeine + S-adenosyl-L-homocysteine + H(+). It participates in alkaloid biosynthesis. Involved in the biosynthesis of caffeine. Catalyzes the conversion of 7-methylxanthine (7mX) to theobromine and of theobromine to caffeine. Has 3-N- and 1-N-methylation activity. The protein is 3,7-dimethylxanthine N-methyltransferase TCS1 of Camellia sinensis (Tea plant).